A 410-amino-acid chain; its full sequence is Lipid droplet-regulating VLDL assembly factor AUP1 (410 aa).

N-acetylmethionine is present on M1. The Cytoplasmic portion of the chain corresponds to 1–20 (MELPSGPGPERLFDSHRLPG). S5 is modified (phosphoserine). The stretch at 21–41 (DCFLLLVLLLYAPVGFCLLVL) is an intramembrane region. Residues 42-410 (RLFLGIHVFL…FTERRAQEAD (369 aa)) are Cytoplasmic-facing. The disordered stretch occupies residues 255–295 (TGTRLTPADKAEHMKRQRHPRLRPQSAQSSFPPSPGPSPDV). S288 and S292 each carry phosphoserine. Residues 296–338 (QLATLAQRVKEVLPHVPLGVIQRDLAKTGCVDLTITNLLEGAV) enclose the CUE domain. The segment at 350-369 (QSLPTASASKFPSSGPVTPQ) is disordered. Phosphoserine is present on S363. T367 carries the post-translational modification Phosphothreonine.

It belongs to the AUP1 family. In terms of assembly, identified in a complex that contains SEL1L, OS9, FAF2/UBXD8, UBE2J1/UBC6E and AUP1. Interacts with the cytoplasmic tail of ITGA2B, ITGA1, ITGA2, ITGA5, ITGAV and ITGAM. Interacts (via C-terminus) with ubiquitin-conjugating enzyme UBE2G2; the interaction recruits UBE2G2 to lipid droplets. Interacts with ubiquitin ligases AMFR/gp78 and RNF139/TRC8; this promotes interaction of UBE2G2 with AMFR and RNF139. Interacts with apolipoprotein APOB. (Microbial infection) Interacts with Dengue virus NS4A; the interaction occurs in the presence of Dengue virus NS4B and induces lipophagy which facilitates production of virus progeny. Post-translationally, monoubiquitinated and diubiquitinated. (Microbial infection) Not ubiquitinated following Dengue virus infection. As to expression, detected in blood platelets and leukocytes (at protein level). Ubiquitous. Highly expressed in placenta, liver, kidney, skeletal muscle, heart and brain.

The protein localises to the endoplasmic reticulum membrane. It localises to the lipid droplet. The protein resides in the cytoplasmic vesicle. Its subcellular location is the autophagosome. Functionally, plays a role in the translocation of terminally misfolded proteins from the endoplasmic reticulum lumen to the cytoplasm and their degradation by the proteasome. Plays a role in lipid droplet formation. Induces lipid droplet clustering. Recruits ubiquitin-conjugating enzyme UBE2G2 to lipid droplets which facilitates its interaction with ubiquitin ligases AMFR/gp78 and RNF139/TRC8, leading to sterol-induced ubiquitination of HMGCR and its subsequent proteasomal degradation. Also required for the degradation of INSIG1, SREBF1 and SREBF2. Plays a role in regulating assembly and secretion of very low density lipoprotein particles and stability of apolipoprotein APOB. Its function is as follows. (Microbial infection) Following Dengue virus infection, required for induction of lipophagy which facilitates production of virus progeny particles. This chain is Lipid droplet-regulating VLDL assembly factor AUP1, found in Homo sapiens (Human).